A 593-amino-acid chain; its full sequence is Metal-response element-binding transcription factor 2 (593 aa).

A disordered region spans residues 1-24; it reads MRDSTGAGNSLVHKRSPLRRNQKT. The span at 12 to 22 shows a compositional bias: basic residues; that stretch reads VHKRSPLRRNQ. Phosphothreonine is present on Thr24. The Tudor domain maps to 44 to 101; the sequence is CKFEEGQDVLARWSDGLFYLGTIKKINILKQSCFIIFEDSSKSWVLWKDIQTGATGSG. 2 consecutive PHD-type zinc fingers follow at residues 102–157 and 201–255; these read EMVC…CVFA and QCYC…CSSG. Disordered stretches follow at residues 357–410 and 444–486; these read VAFK…GPYT and GIAH…TRTG. Lys360 is covalently cross-linked (Glycyl lysine isopeptide (Lys-Gly) (interchain with G-Cter in SUMO2)). Residues 360-374 are compositionally biased toward basic and acidic residues; it reads KAEKEPEGTSHEFKI. Polar residues predominate over residues 447–470; the sequence is HSSNTSDVDLTGASSANETTSASI. Phosphoserine is present on Ser452. Residue Lys522 forms a Glycyl lysine isopeptide (Lys-Gly) (interchain with G-Cter in SUMO2) linkage.

The protein belongs to the Polycomblike family. In terms of assembly, associates with the PRC2 complex, which consists of the core components EED, EZH1 or EZH2, SUZ12, and RBBP4, and various combinations of accessory subunits including AEBP2, JARID2, PHF19, MTF2 and EPOP. Forms a dimeric PRC2.1 (class 1, PRC-PCL) complex consisting of at least SUZ12, RBBP4, and PHF19 or MTF2; PHF19 and MTF2 stabilize the dimeric structure which enhances PRC2 interaction with chromatin.

The protein localises to the nucleus. Polycomb group (PcG) protein that specifically binds histone H3 trimethylated at 'Lys-36' (H3K36me3) and recruits the PRC2 complex, thus enhancing PRC2 H3K27me3 methylation activity. Regulates the transcriptional networks during embryonic stem cell self-renewal and differentiation. Promotes recruitment of the PRC2 complex to the inactive X chromosome in differentiating XX ES cells and PRC2 recruitment to target genes in undifferentiated ES cells. Required to repress Hox genes by enhancing H3K27me3 methylation of the PRC2 complex. In some conditions may act as an inhibitor of PRC2 activity: able to activate the CDKN2A gene and promote cellular senescence by suppressing the catalytic activity of the PRC2 complex locally. Binds to the metal-regulating-element (MRE) of MT1A gene promoter. The protein is Metal-response element-binding transcription factor 2 (Mtf2) of Mus musculus (Mouse).